The sequence spans 160 residues: SsrA-binding protein (160 aa).

It belongs to the SmpB family.

The protein localises to the cytoplasm. In terms of biological role, required for rescue of stalled ribosomes mediated by trans-translation. Binds to transfer-messenger RNA (tmRNA), required for stable association of tmRNA with ribosomes. tmRNA and SmpB together mimic tRNA shape, replacing the anticodon stem-loop with SmpB. tmRNA is encoded by the ssrA gene; the 2 termini fold to resemble tRNA(Ala) and it encodes a 'tag peptide', a short internal open reading frame. During trans-translation Ala-aminoacylated tmRNA acts like a tRNA, entering the A-site of stalled ribosomes, displacing the stalled mRNA. The ribosome then switches to translate the ORF on the tmRNA; the nascent peptide is terminated with the 'tag peptide' encoded by the tmRNA and targeted for degradation. The ribosome is freed to recommence translation, which seems to be the essential function of trans-translation. The chain is SsrA-binding protein from Chloroflexus aurantiacus (strain ATCC 29364 / DSM 637 / Y-400-fl).